Reading from the N-terminus, the 452-residue chain is tRNA modification GTPase MnmE (452 aa).

Residues Arg21, Glu82, and Arg121 each coordinate (6S)-5-formyl-5,6,7,8-tetrahydrofolate. A TrmE-type G domain is found at 214 to 372 (GARVVLVGRP…LAKTIATTLL (159 aa)). Asn224 contacts K(+). GTP is bound by residues 224-229 (NVGKSS), 243-249 (TPIPGTT), 268-271 (DTAG), and 353-355 (SAR). Ser228 provides a ligand contact to Mg(2+). K(+)-binding residues include Thr243, Ile245, and Thr248. A Mg(2+)-binding site is contributed by Thr249. Lys452 serves as a coordination point for (6S)-5-formyl-5,6,7,8-tetrahydrofolate.

The protein belongs to the TRAFAC class TrmE-Era-EngA-EngB-Septin-like GTPase superfamily. TrmE GTPase family. Homodimer. Heterotetramer of two MnmE and two MnmG subunits. The cofactor is K(+).

The protein localises to the cytoplasm. Functionally, exhibits a very high intrinsic GTPase hydrolysis rate. Involved in the addition of a carboxymethylaminomethyl (cmnm) group at the wobble position (U34) of certain tRNAs, forming tRNA-cmnm(5)s(2)U34. This is tRNA modification GTPase MnmE from Chloroflexus aurantiacus (strain ATCC 29366 / DSM 635 / J-10-fl).